A 254-amino-acid chain; its full sequence is Alcohol dehydrogenase 1 (254 aa).

10–33 contributes to the NAD(+) binding site; it reads FVAGLGGIGFDTSREIVKSGPKNL. Ser-138 is a substrate binding site. Catalysis depends on Tyr-151, which acts as the Proton acceptor.

Belongs to the short-chain dehydrogenases/reductases (SDR) family. Homodimer.

It catalyses the reaction a primary alcohol + NAD(+) = an aldehyde + NADH + H(+). It carries out the reaction a secondary alcohol + NAD(+) = a ketone + NADH + H(+). The protein is Alcohol dehydrogenase 1 (Adh1) of Drosophila mulleri (Fruit fly).